The following is a 72-amino-acid chain: MAAKMKKGALVRAVKETLENSLEAQASDSRFPSYLFDSKGEILDLTDEYALVRFYVPTPSVWLRLDQLELAE.

The protein belongs to the complex I NdhO subunit family. NDH-1 can be composed of about 15 different subunits; different subcomplexes with different compositions have been identified which probably have different functions.

The protein localises to the cellular thylakoid membrane. It catalyses the reaction a plastoquinone + NADH + (n+1) H(+)(in) = a plastoquinol + NAD(+) + n H(+)(out). The catalysed reaction is a plastoquinone + NADPH + (n+1) H(+)(in) = a plastoquinol + NADP(+) + n H(+)(out). In terms of biological role, NDH-1 shuttles electrons from an unknown electron donor, via FMN and iron-sulfur (Fe-S) centers, to quinones in the respiratory and/or the photosynthetic chain. The immediate electron acceptor for the enzyme in this species is believed to be plastoquinone. Couples the redox reaction to proton translocation, and thus conserves the redox energy in a proton gradient. Cyanobacterial NDH-1 also plays a role in inorganic carbon-concentration. This Rippkaea orientalis (strain PCC 8801 / RF-1) (Cyanothece sp. (strain PCC 8801)) protein is NAD(P)H-quinone oxidoreductase subunit O.